The primary structure comprises 878 residues: Pyruvate, phosphate dikinase (878 aa).

Residues 1-347 (MKKLIYYFGS…LYILQTRTAK (347 aa)) are N-terminal. R96 lines the ATP pocket. Residues 348–404 (RTAIAAIKIAVQMVEEKLISKEQALMRIDPESLNQLLHTRIDYSKGLTSIADGLPAS) form a linker 1 region. The tract at residues 405-502 (PGAATGIIVF…ILKQDDIITI (98 aa)) is central. A Phosphothreonine; by PDRP1 modification is found at T457. H459 functions as the Tele-phosphohistidine intermediate in the catalytic mechanism. Residues 503 to 537 (DGGTGKVFLGAVPLIQPTFSEESKLILEWADETSK) form a linker 2 region. The tract at residues 538–878 (LKIRTNAETV…AAAQAKIKHG (341 aa)) is C-terminal. R565, R621, E749, G770, T771, N772, and D773 together coordinate substrate. E749 lines the Mg(2+) pocket. Position 773 (D773) interacts with Mg(2+). C835 acts as the Proton donor in catalysis.

This sequence belongs to the PEP-utilizing enzyme family. As to quaternary structure, homodimer. Requires Mg(2+) as cofactor. Post-translationally, phosphorylation of Thr-457 in the dark inactivates the enzyme. Dephosphorylation upon light stimulation reactivates the enzyme.

The catalysed reaction is pyruvate + phosphate + ATP = phosphoenolpyruvate + AMP + diphosphate + H(+). Activated by light-induced dephosphorylation. Inhibited by dark-induced phosphorylation. Both reactions are catalyzed by PDRP1. Its function is as follows. Catalyzes the reversible phosphorylation of pyruvate and phosphate. This is Pyruvate, phosphate dikinase (ppdK) from Rickettsia bellii (strain RML369-C).